Consider the following 319-residue polypeptide: Olfactory receptor 2S2 (319 aa).

Residues M1–K26 are Extracellular-facing. An N-linked (GlcNAc...) asparagine glycan is attached at N5. Residues T27–T50 form a helical membrane-spanning segment. The Cytoplasmic segment spans residues I51–T58. The chain crosses the membrane as a helical span at residues P59–P80. At L81–Q101 the chain is on the extracellular side. The cysteines at positions 98 and 190 are disulfide-linked. A helical transmembrane segment spans residues M102–F121. At D122–A140 the chain is on the cytoplasmic side. Residues A141–V159 form a helical membrane-spanning segment. Over H160–N196 the chain is Extracellular. The helical transmembrane segment at V197–V220 threads the bilayer. Over F221 to K237 the chain is Cytoplasmic. A helical membrane pass occupies residues V238–Y260. Residues G261–K279 are Extracellular-facing. A helical transmembrane segment spans residues L280–L299. The Cytoplasmic portion of the chain corresponds to R300–Q319.

The protein belongs to the G-protein coupled receptor 1 family.

It is found in the cell membrane. Functionally, odorant receptor. This Homo sapiens (Human) protein is Olfactory receptor 2S2 (OR2S2).